Consider the following 370-residue polypeptide: TD and POZ domain-containing protein 4 (370 aa).

Residues 19 to 149 (KLCYRWTISN…DDKFTLLCKV (131 aa)) form the MATH domain. Residues 188 to 251 (TDCSLLVAGH…MMGFIYTGKV (64 aa)) form the BTB domain.

This sequence belongs to the Tdpoz family.

This Mus musculus (Mouse) protein is TD and POZ domain-containing protein 4.